Consider the following 206-residue polypeptide: Protein GrpE (206 aa).

Residues 1–10 (MTDPDLHQND) show a composition bias toward basic and acidic residues. The segment at 1–38 (MTDPDLHQNDPENPAQASEPVVSKPYIMPDDPETGSAE) is disordered.

Belongs to the GrpE family. Homodimer.

Its subcellular location is the cytoplasm. Its function is as follows. Participates actively in the response to hyperosmotic and heat shock by preventing the aggregation of stress-denatured proteins, in association with DnaK and GrpE. It is the nucleotide exchange factor for DnaK and may function as a thermosensor. Unfolded proteins bind initially to DnaJ; upon interaction with the DnaJ-bound protein, DnaK hydrolyzes its bound ATP, resulting in the formation of a stable complex. GrpE releases ADP from DnaK; ATP binding to DnaK triggers the release of the substrate protein, thus completing the reaction cycle. Several rounds of ATP-dependent interactions between DnaJ, DnaK and GrpE are required for fully efficient folding. The polypeptide is Protein GrpE (Bradyrhizobium sp. (strain ORS 278)).